The sequence spans 314 residues: 4-hydroxy-3-methylbut-2-enyl diphosphate reductase (314 aa).

Cys12 contributes to the [4Fe-4S] cluster binding site. Residues His43 and His81 each contribute to the (2E)-4-hydroxy-3-methylbut-2-enyl diphosphate site. His43 and His81 together coordinate dimethylallyl diphosphate. 2 residues coordinate isopentenyl diphosphate: His43 and His81. Cys103 contacts [4Fe-4S] cluster. Position 131 (His131) interacts with (2E)-4-hydroxy-3-methylbut-2-enyl diphosphate. His131 contacts dimethylallyl diphosphate. His131 contacts isopentenyl diphosphate. Residue Glu133 is the Proton donor of the active site. Thr170 lines the (2E)-4-hydroxy-3-methylbut-2-enyl diphosphate pocket. Cys198 contributes to the [4Fe-4S] cluster binding site. Residues Ser226, Asn228, and Ser271 each coordinate (2E)-4-hydroxy-3-methylbut-2-enyl diphosphate. Residues Ser226, Asn228, and Ser271 each contribute to the dimethylallyl diphosphate site. Ser226, Asn228, and Ser271 together coordinate isopentenyl diphosphate.

Belongs to the IspH family. [4Fe-4S] cluster serves as cofactor.

It carries out the reaction isopentenyl diphosphate + 2 oxidized [2Fe-2S]-[ferredoxin] + H2O = (2E)-4-hydroxy-3-methylbut-2-enyl diphosphate + 2 reduced [2Fe-2S]-[ferredoxin] + 2 H(+). The enzyme catalyses dimethylallyl diphosphate + 2 oxidized [2Fe-2S]-[ferredoxin] + H2O = (2E)-4-hydroxy-3-methylbut-2-enyl diphosphate + 2 reduced [2Fe-2S]-[ferredoxin] + 2 H(+). The protein operates within isoprenoid biosynthesis; dimethylallyl diphosphate biosynthesis; dimethylallyl diphosphate from (2E)-4-hydroxy-3-methylbutenyl diphosphate: step 1/1. It participates in isoprenoid biosynthesis; isopentenyl diphosphate biosynthesis via DXP pathway; isopentenyl diphosphate from 1-deoxy-D-xylulose 5-phosphate: step 6/6. Functionally, catalyzes the conversion of 1-hydroxy-2-methyl-2-(E)-butenyl 4-diphosphate (HMBPP) into a mixture of isopentenyl diphosphate (IPP) and dimethylallyl diphosphate (DMAPP). Acts in the terminal step of the DOXP/MEP pathway for isoprenoid precursor biosynthesis. This is 4-hydroxy-3-methylbut-2-enyl diphosphate reductase from Halalkalibacterium halodurans (strain ATCC BAA-125 / DSM 18197 / FERM 7344 / JCM 9153 / C-125) (Bacillus halodurans).